Here is a 228-residue protein sequence, read N- to C-terminus: 5'(3')-deoxyribonucleotidase, mitochondrial (228 aa).

The N-terminal 31 residues, 1 to 31 (MIRLGGWCARRLCSAAVPAGRRGAAGGLGLA), are a transit peptide targeting the mitochondrion. Asp41 acts as the Nucleophile in catalysis. 2 residues coordinate Mg(2+): Asp41 and Asp43. Asp43 serves as the catalytic Proton donor. Substrate-binding residues include Asp43, Phe49, Phe75, Trp76, Val77, Trp96, Thr130, and Lys165. Asp176 is a Mg(2+) binding site.

It belongs to the 5'(3')-deoxyribonucleotidase family. Homodimer. Mg(2+) serves as cofactor. In terms of tissue distribution, highly expressed in heart, brain and skeletal muscle. Detected at very low levels in kidney and pancreas.

It is found in the mitochondrion. Its function is as follows. Dephosphorylates specifically the 5' and 2'(3')-phosphates of uracil and thymine deoxyribonucleotides, and so protects mitochondrial DNA replication from excess dTTP. Has only marginal activity towards dIMP and dGMP. This chain is 5'(3')-deoxyribonucleotidase, mitochondrial (NT5M), found in Homo sapiens (Human).